We begin with the raw amino-acid sequence, 83 residues long: Short neurotoxin NCA-02/NCA-05/UER-05 (83 aa).

Residues 1–21 (MKTLLLTLVVVTMVCLDLGYT) form the signal peptide. 4 cysteine pairs are disulfide-bonded: Cys24–Cys45, Cys38–Cys62, Cys64–Cys75, and Cys76–Cys81.

Belongs to the three-finger toxin family. Short-chain subfamily. Type I alpha-neurotoxin sub-subfamily. As to expression, expressed by the venom gland.

Its subcellular location is the secreted. Its function is as follows. Binds to muscle nicotinic acetylcholine receptor (nAChR) and inhibit acetylcholine from binding to the receptor, thereby impairing neuromuscular transmission. This chain is Short neurotoxin NCA-02/NCA-05/UER-05, found in Laticauda colubrina (Yellow-lipped sea krait).